A 225-amino-acid polypeptide reads, in one-letter code: PKHD-type hydroxylase YbiX (225 aa).

One can recognise a Fe2OG dioxygenase domain in the interval 78–177 (TLSTPLFNRY…RVASFMWIQS (100 aa)). Residues His-96, Asp-98, and His-158 each coordinate Fe cation. Arg-168 contributes to the 2-oxoglutarate binding site.

Requires Fe(2+) as cofactor. The cofactor is L-ascorbate.

This chain is PKHD-type hydroxylase YbiX, found in Escherichia coli O6:K15:H31 (strain 536 / UPEC).